We begin with the raw amino-acid sequence, 194 residues long: NADH-quinone oxidoreductase subunit B (194 aa).

Pro residues predominate over residues 1-11 (MGVIATPPPSV). The interval 1–24 (MGVIATPPPSVQGPSSQVPSSAPI) is disordered. A compositionally biased stretch (low complexity) spans 12 to 21 (QGPSSQVPSS). [4Fe-4S] cluster-binding residues include Cys72, Cys73, Cys137, and Cys167.

This sequence belongs to the complex I 20 kDa subunit family. As to quaternary structure, NDH-1 is composed of 14 different subunits. Subunits NuoB, C, D, E, F, and G constitute the peripheral sector of the complex. Requires [4Fe-4S] cluster as cofactor.

The protein localises to the cell inner membrane. The catalysed reaction is a quinone + NADH + 5 H(+)(in) = a quinol + NAD(+) + 4 H(+)(out). NDH-1 shuttles electrons from NADH, via FMN and iron-sulfur (Fe-S) centers, to quinones in the respiratory chain. The immediate electron acceptor for the enzyme in this species is believed to be ubiquinone. Couples the redox reaction to proton translocation (for every two electrons transferred, four hydrogen ions are translocated across the cytoplasmic membrane), and thus conserves the redox energy in a proton gradient. This is NADH-quinone oxidoreductase subunit B from Rhodospirillum centenum (strain ATCC 51521 / SW).